We begin with the raw amino-acid sequence, 120 residues long: Large ribosomal subunit protein uL18 (120 aa).

Belongs to the universal ribosomal protein uL18 family. In terms of assembly, part of the 50S ribosomal subunit; part of the 5S rRNA/L5/L18/L25 subcomplex. Contacts the 5S and 23S rRNAs.

In terms of biological role, this is one of the proteins that bind and probably mediate the attachment of the 5S RNA into the large ribosomal subunit, where it forms part of the central protuberance. The sequence is that of Large ribosomal subunit protein uL18 from Brucella suis biovar 1 (strain 1330).